The chain runs to 75 residues: Small ribosomal subunit protein bS18 (75 aa).

This sequence belongs to the bacterial ribosomal protein bS18 family. As to quaternary structure, part of the 30S ribosomal subunit. Forms a tight heterodimer with protein bS6.

Its function is as follows. Binds as a heterodimer with protein bS6 to the central domain of the 16S rRNA, where it helps stabilize the platform of the 30S subunit. The protein is Small ribosomal subunit protein bS18 of Colwellia psychrerythraea (strain 34H / ATCC BAA-681) (Vibrio psychroerythus).